The following is a 555-amino-acid chain: Transcriptional adapter 2b (555 aa).

Residues 8-63 form a ZZ-type zinc finger; it reads FTKYNCTNCQDDIQGIRVHCAECENFDLCLQCFAAGAEIGAHQNNHSYQFMDTGTS. Zn(2+)-binding residues include C13, C16, C27, C30, C36, C39, H49, and H53. One can recognise an SANT domain in the interval 69–121; sequence RGKGAWTAREEIRLLDAIEQYGFGNWEDISKHIETKSAEDAKEEYVNKFVNGT. The tract at residues 318–372 is disordered; the sequence is THRSTGPYGHGKTDHTHTSNGSHRPPSSSLHSPQPNLRKVEMSSGGEASSNSIAP. Residues 339 to 352 are compositionally biased toward low complexity; it reads SHRPPSSSLHSPQP. A compositionally biased stretch (polar residues) spans 363-372; the sequence is GEASSNSIAP.

Component of histone acetyltransferase complexes containing Gcn5 and Ada3. As to quaternary structure, can heterooligomerize with Isoform A. Component of the Spt-Ada-Gcn5 acetyltransferase (SAGA) complex consisting of Ada1, Ada2b (Isoform B), Ada3, wda, Saf6, Spt3, Spt7, Spt20, Taf9, Taf10b, Taf12, Nipped-A/Tra1, Sf3b3, Sf3b5, not/nonstop, Sgf11, Sgf29, e(y)2, Atxn7 and Gcn5. Taf5 and Taf10, which has partially redundant properties with Taf10b, may also be part of this complex. Interacts (via C-terminus) with Spt3 and Taf12; the interactions are direct. Interacts with Ada3; the interaction is probably direct. May also interact directly with Spt7 and Gcn5. Interacts with p53. In terms of assembly, can heterooligomerize with Isoform B. Component of the Chiffon histone acetyltransferase (CHAT) complex consisting of Ada3, Sgf29, Gcn5, chif/chiffon and Ada2b (Isoform A). Interacts (via N-terminus) with Gcn5 and Ada3; the interaction is direct. Can interact directly with Spt7 in vitro but in vivo this interaction is not stable probably due to the absence of other SAGA components. Interacts with p53. Expressed in nurse cells of stage 10 egg chambers and transcripts are dumped into the oocyte when nurse cells degenerate at late oogenesis.

It is found in the nucleus. Its function is as follows. Component of several Gcn5-containing histone acetyltransferase complexes that regulate nucleosome organization; involved in acetylation of histone H3, particularly on Lys-10 (H3K9ac) and Lys-15 (H3K14ac). Regulates the transcription of a subset of genes during development; affects recruitment of RNA polymerase II. May be involved in the function of some acidic activation domains, which activate transcription at distant sites. Involved in the p53-dependent apoptosis pathway response to DNA damage by genotoxic agents. Component of the SAGA histone acetyltransferase complex, which predominantly acetylates histone H3. In terms of biological role, component of the CHAT histone acetyltransferase complex, which predominantly acetylates histone H3. This is Transcriptional adapter 2b from Drosophila melanogaster (Fruit fly).